The primary structure comprises 500 residues: Pyruvate kinase 1 (500 aa).

Ser2 bears the N-acetylserine mark. Ser9 and Ser16 each carry phosphoserine. Thr31 is subject to Phosphothreonine. Arg49 is a binding site for substrate. K(+) contacts are provided by Asn51 and Ser53. An ATP-binding site is contributed by 51 to 54; that stretch reads NFSH. Ser70 is modified (phosphoserine). Residues Asp84 and Thr85 each coordinate K(+). Residue Arg91 participates in ATP binding. Residues Lys119, Lys124, Lys161, Lys164, and Lys166 each participate in a glycyl lysine isopeptide (Lys-Gly) (interchain with G-Cter in URM1) cross-link. Lys177 contributes to the ATP binding site. Phosphothreonine is present on Thr184. Residue Lys204 forms a Glycyl lysine isopeptide (Lys-Gly) (interchain with G-Cter in ubiquitin) linkage. A Phosphoserine modification is found at Ser213. Lys240 contributes to the substrate binding site. Residue Glu242 coordinates Mn(2+). Residue Lys255 forms a Glycyl lysine isopeptide (Lys-Gly) (interchain with G-Cter in ubiquitin) linkage. Gly265 and Asp266 together coordinate substrate. A Mn(2+)-binding site is contributed by Asp266. A Glycyl lysine isopeptide (Lys-Gly) (interchain with G-Cter in URM1) cross-link involves residue Lys292. Thr298 provides a ligand contact to substrate. Ser316 carries the post-translational modification Phosphoserine. Lys394 is covalently cross-linked (Glycyl lysine isopeptide (Lys-Gly) (interchain with G-Cter in URM1)). A beta-D-fructose 1,6-bisphosphate-binding site is contributed by 402–407; it reads STSGTT. Cys418 carries the post-translational modification Cysteine persulfide. Lys446 is covalently cross-linked (Glycyl lysine isopeptide (Lys-Gly) (interchain with G-Cter in ubiquitin); alternate). A Glycyl lysine isopeptide (Lys-Gly) (interchain with G-Cter in URM1); alternate cross-link involves residue Lys446. Position 450 is a phosphoserine (Ser450). Trp452 and Arg459 together coordinate beta-D-fructose 1,6-bisphosphate. Residue Thr478 is modified to Phosphothreonine. Gly484 is a beta-D-fructose 1,6-bisphosphate binding site.

It belongs to the pyruvate kinase family. As to quaternary structure, homotetramer. Requires Mg(2+) as cofactor. It depends on K(+) as a cofactor. Conjugated to URM1, a ubiquitin-like protein, in response to oxidative stresses. The attachment of URM1 to lysine residues exclusively depends on the presence of a peroxidatic cysteine in the target protein, with low specificity for the particular residue, motif, or structural context at which urmylation can occur. The URM1-conjugation reaction is mechanistically and directly coupled to the process of cysteine persulfidation, transfering the sulfur atom of the URM1 thiocarboxyl group to redox-active cysteine residues in the target protein if it is exposed to oxidative conditions. Post-translationally, persulfidated on specific redox-active cysteine residues. Persulfidation (also called protein S-sulfhydration) may provide a molecular mechanism that enables cells to protect vulnerable cysteine residues from reactive oxygen species (ROS) under stress conditions.

The enzyme catalyses pyruvate + ATP = phosphoenolpyruvate + ADP + H(+). It functions in the pathway carbohydrate degradation; glycolysis; pyruvate from D-glyceraldehyde 3-phosphate: step 5/5. The activity is regulated by glucose levels. Activated by fructose-1,6-bisphosphate. The polypeptide is Pyruvate kinase 1 (CDC19) (Saccharomyces cerevisiae (strain ATCC 204508 / S288c) (Baker's yeast)).